A 345-amino-acid polypeptide reads, in one-letter code: Probable aldo-keto reductase 3 (345 aa).

Y63 functions as the Proton donor in the catalytic mechanism. H130 is a binding site for substrate. 209 to 219 (SPLGRGFFASG) provides a ligand contact to NADP(+).

It belongs to the aldo/keto reductase family.

This is Probable aldo-keto reductase 3 from Arabidopsis thaliana (Mouse-ear cress).